Here is a 1015-residue protein sequence, read N- to C-terminus: DNA ligase 3 (1015 aa).

The PARP-type zinc-finger motif lies at Phe94 to Ser186. The Zn(2+) site is built by Cys106, Cys109, His140, and Cys143. Ser211, Ser217, Ser228, and Ser244 each carry phosphoserine. Residues Gly229–Lys255 are disordered. Residues Lys234–Ala253 show a composition bias toward polar residues. Interaction with DNA stretches follow at residues Pro279–Asn282, Val323–Asp328, Thr393–Asp396, and Lys426–Lys432. Glu511 provides a ligand contact to ATP. Lys513 (N6-AMP-lysine intermediate) is an active-site residue. Positions 518 and 533 each coordinate ATP. The Mg(2+) site is built by Glu565 and Glu660. Residues Lys665, Arg676, and Lys680 each coordinate ATP. The segment at Asp849–Lys926 is disordered. Over residues Thr854–Lys884 the composition is skewed to low complexity. Position 919 is a phosphoserine (Ser919). Residues Val939 to Cys1015 form the BRCT domain.

Belongs to the ATP-dependent DNA ligase family. In terms of assembly, isoform 3 interacts (via BRCT domain) with the nuclear DNA-repair protein XRCC1. Interacts with POLG. Interacts with POLB. Requires Mg(2+) as cofactor. As to expression, the alpha isoform is expressed in all tissues, while the beta isoform is expressed only in the testis.

The protein resides in the nucleus. It catalyses the reaction ATP + (deoxyribonucleotide)n-3'-hydroxyl + 5'-phospho-(deoxyribonucleotide)m = (deoxyribonucleotide)n+m + AMP + diphosphate.. Its function is as follows. The alpha isoform interacts with DNA-repair protein XRCC1 and can correct defective DNA strand-break repair and sister chromatid exchange following treatment with ionizing radiation and alkylating agents. The beta isoform does not interact with XRCC1 and may be specifically involved in the completion of homologous recombination events that occur during meiotic prophase. The polypeptide is DNA ligase 3 (Lig3) (Mus musculus (Mouse)).